We begin with the raw amino-acid sequence, 348 residues long: Probable dual-specificity RNA methyltransferase RlmN (348 aa).

Catalysis depends on Glu-93, which acts as the Proton acceptor. The Radical SAM core domain occupies Thr-99–Asn-323. Cys-106 and Cys-338 are oxidised to a cystine. Positions 113, 117, and 120 each coordinate [4Fe-4S] cluster. S-adenosyl-L-methionine-binding positions include Gly-160–Glu-161, Ser-190, Ser-219–His-221, and Asn-295. Cys-338 (S-methylcysteine intermediate) is an active-site residue.

The protein belongs to the radical SAM superfamily. RlmN family. Requires [4Fe-4S] cluster as cofactor.

It is found in the cytoplasm. The enzyme catalyses adenosine(2503) in 23S rRNA + 2 reduced [2Fe-2S]-[ferredoxin] + 2 S-adenosyl-L-methionine = 2-methyladenosine(2503) in 23S rRNA + 5'-deoxyadenosine + L-methionine + 2 oxidized [2Fe-2S]-[ferredoxin] + S-adenosyl-L-homocysteine. It catalyses the reaction adenosine(37) in tRNA + 2 reduced [2Fe-2S]-[ferredoxin] + 2 S-adenosyl-L-methionine = 2-methyladenosine(37) in tRNA + 5'-deoxyadenosine + L-methionine + 2 oxidized [2Fe-2S]-[ferredoxin] + S-adenosyl-L-homocysteine. In terms of biological role, specifically methylates position 2 of adenine 2503 in 23S rRNA and position 2 of adenine 37 in tRNAs. This is Probable dual-specificity RNA methyltransferase RlmN from Prochlorococcus marinus subsp. pastoris (strain CCMP1986 / NIES-2087 / MED4).